The chain runs to 365 residues: Glycosyltransferase 8 domain-containing protein 1 (365 aa).

The Cytoplasmic segment spans residues 1 to 4 (MTVR). The chain crosses the membrane as a helical; Signal-anchor for type II membrane protein span at residues 5-22 (RVNVVILVLLVVAFLIVL). At 23 to 365 (HRNLLNLNDF…HPIRKHVEEK (343 aa)) the chain is on the lumenal side. N-linked (GlcNAc...) asparagine glycosylation is found at Asn102, Asn181, Asn245, and Asn253.

It belongs to the glycosyltransferase 8 family.

The protein localises to the membrane. The polypeptide is Glycosyltransferase 8 domain-containing protein 1 (glt8d1) (Danio rerio (Zebrafish)).